Reading from the N-terminus, the 110-residue chain is Large ribosomal subunit protein P1B (110 aa).

Positions 69–85 (PAAGGAGAPAAAAGGEA) are enriched in low complexity. The segment at 69-110 (PAAGGAGAPAAAAGGEAAAEEQKEEAKEEEESDEDMGFGLFD) is disordered. The segment covering 95 to 104 (KEEEESDEDM) has biased composition (acidic residues).

Belongs to the eukaryotic ribosomal protein P1/P2 family. As to quaternary structure, component of the large ribosomal subunit (LSU). Mature yeast ribosomes consist of a small (40S) and a large (60S) subunit. The 40S small subunit contains 1 molecule of ribosomal RNA (18S rRNA) and at least 33 different proteins. The large 60S subunit contains 3 rRNA molecules (25S, 5.8S and 5S rRNA) and at least 46 different proteins. The acidic ribosomal P-proteins form the stalk structure of the 60S subunit. They are organized as a pentameric complex in which uL10/P0 interacts with 2 heterodimers of P1 and P2 proteins.

It localises to the cytoplasm. Component of the ribosome, a large ribonucleoprotein complex responsible for the synthesis of proteins in the cell. The small ribosomal subunit (SSU) binds messenger RNAs (mRNAs) and translates the encoded message by selecting cognate aminoacyl-transfer RNA (tRNA) molecules. The large subunit (LSU) contains the ribosomal catalytic site termed the peptidyl transferase center (PTC), which catalyzes the formation of peptide bonds, thereby polymerizing the amino acids delivered by tRNAs into a polypeptide chain. The nascent polypeptides leave the ribosome through a tunnel in the LSU and interact with protein factors that function in enzymatic processing, targeting, and the membrane insertion of nascent chains at the exit of the ribosomal tunnel. The sequence is that of Large ribosomal subunit protein P1B (rpp102) from Schizosaccharomyces pombe (strain 972 / ATCC 24843) (Fission yeast).